The sequence spans 517 residues: Crotonobetaine/carnitine--CoA ligase (517 aa).

It belongs to the ATP-dependent AMP-binding enzyme family.

The enzyme catalyses 4-(trimethylamino)butanoate + ATP + CoA = 4-(trimethylamino)butanoyl-CoA + AMP + diphosphate. It catalyses the reaction crotonobetaine + ATP + CoA = crotonobetainyl-CoA + AMP + diphosphate. The catalysed reaction is (R)-carnitine + ATP + CoA = (R)-carnitinyl-CoA + AMP + diphosphate. The protein operates within amine and polyamine metabolism; carnitine metabolism. Catalyzes the transfer of CoA to carnitine, generating the initial carnitinyl-CoA needed for the CaiB reaction cycle. Also has activity toward crotonobetaine and gamma-butyrobetaine. The protein is Crotonobetaine/carnitine--CoA ligase of Citrobacter koseri (strain ATCC BAA-895 / CDC 4225-83 / SGSC4696).